Reading from the N-terminus, the 81-residue chain is Short neurotoxin 1 (81 aa).

An N-terminal signal peptide occupies residues 1–21 (MKTLLLTLVVVTIVCLDLGYT). Disulfide bonds link Cys-24-Cys-43, Cys-38-Cys-60, Cys-62-Cys-73, and Cys-74-Cys-79.

The protein belongs to the three-finger toxin family. Short-chain subfamily. Type I alpha-neurotoxin sub-subfamily. In terms of tissue distribution, expressed by the venom gland.

It is found in the secreted. Binds to muscle nicotinic acetylcholine receptor (nAChR) and inhibit acetylcholine from binding to the receptor, thereby impairing neuromuscular transmission. The protein is Short neurotoxin 1 of Hoplocephalus stephensii (Stephens's banded snake).